A 29-amino-acid polypeptide reads, in one-letter code: Cyclotide vibi-D (29 aa).

A cross-link (cyclopeptide (Gly-Asn)) is located at residues 1 to 29; it reads GLPVCGETCFGGRCNTPGCTCSYPICTRN. Cystine bridges form between C5–C19, C9–C21, and C14–C26.

In terms of processing, this is a cyclic peptide.

In terms of biological role, probably participates in a plant defense mechanism. Has moderate levels of cytotoxic activity, active against a human lymphoma cell line with an IC(50) of &gt;30 uM. The chain is Cyclotide vibi-D from Viola biflora (Yellow wood violet).